Consider the following 718-residue polypeptide: Fatty acid oxidation complex subunit alpha (718 aa).

An enoyl-CoA hydratase/isomerase region spans residues 1–188 (MIYQGESIRV…KVGAVDAVVE (188 aa)). Asp-295 lines the substrate pocket. The segment at 310–718 (TKEIKTAGVL…KSYFDTTSAK (409 aa)) is 3-hydroxyacyl-CoA dehydrogenase. NAD(+)-binding positions include Met-324, Asp-343, 400 to 402 (VVE), Lys-407, and Ser-429. The active-site For 3-hydroxyacyl-CoA dehydrogenase activity is His-450. Asn-453 is a binding site for NAD(+). Substrate-binding residues include Asn-500 and Tyr-658.

The protein in the N-terminal section; belongs to the enoyl-CoA hydratase/isomerase family. In the C-terminal section; belongs to the 3-hydroxyacyl-CoA dehydrogenase family. In terms of assembly, heterotetramer of two alpha chains (FadB) and two beta chains (FadA).

It carries out the reaction a (3S)-3-hydroxyacyl-CoA + NAD(+) = a 3-oxoacyl-CoA + NADH + H(+). The enzyme catalyses a (3S)-3-hydroxyacyl-CoA = a (2E)-enoyl-CoA + H2O. The catalysed reaction is a 4-saturated-(3S)-3-hydroxyacyl-CoA = a (3E)-enoyl-CoA + H2O. It catalyses the reaction (3S)-3-hydroxybutanoyl-CoA = (3R)-3-hydroxybutanoyl-CoA. It carries out the reaction a (3Z)-enoyl-CoA = a 4-saturated (2E)-enoyl-CoA. The enzyme catalyses a (3E)-enoyl-CoA = a 4-saturated (2E)-enoyl-CoA. Its pathway is lipid metabolism; fatty acid beta-oxidation. Its function is as follows. Involved in the aerobic and anaerobic degradation of long-chain fatty acids via beta-oxidation cycle. Catalyzes the formation of 3-oxoacyl-CoA from enoyl-CoA via L-3-hydroxyacyl-CoA. It can also use D-3-hydroxyacyl-CoA and cis-3-enoyl-CoA as substrate. The protein is Fatty acid oxidation complex subunit alpha of Idiomarina loihiensis (strain ATCC BAA-735 / DSM 15497 / L2-TR).